The chain runs to 434 residues: Ribulose bisphosphate carboxylase-like protein (434 aa).

Mg(2+)-binding residues include Lys-198, Asp-200, and Glu-201. Lys-198 carries the N6-carboxylysine modification.

This sequence belongs to the RuBisCO large chain family. Type IV subfamily. Homodimer. Mg(2+) is required as a cofactor.

In terms of biological role, may be involved in sulfur metabolism and oxidative stress response. Does not show RuBisCO activity. The chain is Ribulose bisphosphate carboxylase-like protein from Chlorobaculum thiosulfatiphilum (Chlorobium limicola f.sp. thiosulfatophilum).